The sequence spans 214 residues: Histidine biosynthesis bifunctional protein HisIE (214 aa).

The phosphoribosyl-AMP cyclohydrolase stretch occupies residues 1 to 125 (MPATALSLPL…ESIEPPPADT (125 aa)). Positions 126-214 (LSQVYNIVCQ…VYEQLQLRRR (89 aa)) are phosphoribosyl-ATP pyrophosphohydrolase.

It in the N-terminal section; belongs to the PRA-CH family. The protein in the C-terminal section; belongs to the PRA-PH family.

It localises to the cytoplasm. The catalysed reaction is 1-(5-phospho-beta-D-ribosyl)-ATP + H2O = 1-(5-phospho-beta-D-ribosyl)-5'-AMP + diphosphate + H(+). The enzyme catalyses 1-(5-phospho-beta-D-ribosyl)-5'-AMP + H2O = 1-(5-phospho-beta-D-ribosyl)-5-[(5-phospho-beta-D-ribosylamino)methylideneamino]imidazole-4-carboxamide. Its pathway is amino-acid biosynthesis; L-histidine biosynthesis; L-histidine from 5-phospho-alpha-D-ribose 1-diphosphate: step 2/9. It participates in amino-acid biosynthesis; L-histidine biosynthesis; L-histidine from 5-phospho-alpha-D-ribose 1-diphosphate: step 3/9. This is Histidine biosynthesis bifunctional protein HisIE from Thermosynechococcus vestitus (strain NIES-2133 / IAM M-273 / BP-1).